The following is a 440-amino-acid chain: Transposon Ty1-GR1 Gag polyprotein (440 aa).

The segment covering Met1–Ser16 has biased composition (low complexity). 3 disordered regions span residues Met1–Gln93, Pro126–Pro173, and Gly352–Tyr440. Polar residues-rich tracts occupy residues Thr48–Ser60, Ser71–Gln93, and Gln127–Phe152. A compositionally biased stretch (low complexity) spans Thr153–Thr165. Positions Asn299–His401 are RNA-binding. Residues Asn402–Ser418 are compositionally biased toward low complexity. Ser416 carries the post-translational modification Phosphoserine. Residues Lys419 to Asn428 show a composition bias toward polar residues. Positions Asn429–Tyr440 are enriched in basic and acidic residues.

Homotrimer.

It is found in the cytoplasm. In terms of biological role, capsid protein (CA) is the structural component of the virus-like particle (VLP), forming the shell that encapsulates the retrotransposons dimeric RNA genome. The particles are assembled from trimer-clustered units and there are holes in the capsid shells that allow for the diffusion of macromolecules. CA also has nucleocapsid-like chaperone activity, promoting primer tRNA(i)-Met annealing to the multipartite primer-binding site (PBS), dimerization of Ty1 RNA and initiation of reverse transcription. The polypeptide is Transposon Ty1-GR1 Gag polyprotein (TY1A-GR1) (Saccharomyces cerevisiae (strain ATCC 204508 / S288c) (Baker's yeast)).